A 230-amino-acid chain; its full sequence is A-type ATP synthase subunit D (230 aa).

A disordered region spans residues 204–230 (AKKEEEEDALAAEEEAEEEPEAVTADD). The span at 208 to 230 (EEEDALAAEEEAEEEPEAVTADD) shows a compositional bias: acidic residues.

This sequence belongs to the V-ATPase D subunit family. Has multiple subunits with at least A(3), B(3), C, D, E, F, H, I and proteolipid K(x).

Its subcellular location is the cell membrane. In terms of biological role, component of the A-type ATP synthase that produces ATP from ADP in the presence of a proton gradient across the membrane. The protein is A-type ATP synthase subunit D of Haloarcula marismortui (strain ATCC 43049 / DSM 3752 / JCM 8966 / VKM B-1809) (Halobacterium marismortui).